The sequence spans 160 residues: Large ribosomal subunit protein eL21A (160 aa).

K32 is covalently cross-linked (Glycyl lysine isopeptide (Lys-Gly) (interchain with G-Cter in ubiquitin)).

This sequence belongs to the eukaryotic ribosomal protein eL21 family. As to quaternary structure, component of the large ribosomal subunit (LSU). Mature yeast ribosomes consist of a small (40S) and a large (60S) subunit. The 40S small subunit contains 1 molecule of ribosomal RNA (18S rRNA) and 33 different proteins (encoded by 57 genes). The large 60S subunit contains 3 rRNA molecules (25S, 5.8S and 5S rRNA) and 46 different proteins (encoded by 81 genes).

The protein resides in the cytoplasm. Its function is as follows. Component of the ribosome, a large ribonucleoprotein complex responsible for the synthesis of proteins in the cell. The small ribosomal subunit (SSU) binds messenger RNAs (mRNAs) and translates the encoded message by selecting cognate aminoacyl-transfer RNA (tRNA) molecules. The large subunit (LSU) contains the ribosomal catalytic site termed the peptidyl transferase center (PTC), which catalyzes the formation of peptide bonds, thereby polymerizing the amino acids delivered by tRNAs into a polypeptide chain. The nascent polypeptides leave the ribosome through a tunnel in the LSU and interact with protein factors that function in enzymatic processing, targeting, and the membrane insertion of nascent chains at the exit of the ribosomal tunnel. This is Large ribosomal subunit protein eL21A from Saccharomyces cerevisiae (strain ATCC 204508 / S288c) (Baker's yeast).